The chain runs to 306 residues: Olfactory receptor 8G17 (306 aa).

Topologically, residues 1–28 are extracellular; sequence MEKGNQSTVNKFFLSGLTEQPELQLPLF. A glycan (N-linked (GlcNAc...) asparagine) is linked at asparagine 5. A helical membrane pass occupies residues 29–49; the sequence is LLFLGIYLLTVLGNLGMIILI. At 50 to 56 the chain is on the cytoplasmic side; sequence LLSSYLH. The chain crosses the membrane as a helical span at residues 57-77; that stretch reads TPMYFFLSSLSFIDFCQSTVI. Residues 78–97 are Extracellular-facing; that stretch reads TPKMLVKFVREKNEISYPEC. Residues 98–118 traverse the membrane as a helical segment; that stretch reads ITQLCFFVIFAVSESYMLAAM. Residues 119 to 143 are Cytoplasmic-facing; sequence AYDRYVAICSPLLYSSIMSQHKCLS. The chain crosses the membrane as a helical span at residues 144–164; that stretch reads LVLGVYILGIVCASAHVGCIF. Topologically, residues 165–196 are extracellular; it reads RIDFCKSDLINHYFCDLISILNLSCSNIFVND. The helical transmembrane segment at 197-217 threads the bilayer; that stretch reads LVILIFSLINTIFPTLTILSS. Residues 218–236 are Cytoplasmic-facing; sequence YAFIIISILRIKSTEGRSK. A helical transmembrane segment spans residues 237 to 257; that stretch reads AFSTCSSHISAVAIFYISAGF. Residues 258-271 are Extracellular-facing; that stretch reads TYLNPSSSHSMDEG. The chain crosses the membrane as a helical span at residues 272-292; the sequence is KVSSIFYTIIVPMLNPLIYSL. Topologically, residues 293–306 are cytoplasmic; it reads RNKDVKIALKKMIE.

It belongs to the G-protein coupled receptor 1 family.

The protein localises to the cell membrane. Odorant receptor. The sequence is that of Olfactory receptor 8G17 from Mus musculus (Mouse).